The primary structure comprises 930 residues: Carnosine synthase 1 (930 aa).

A disordered region spans residues 1–24; the sequence is MISVDRLSEEQALGMKEQEWAGPE. The region spanning 624–825 is the ATP-grasp domain; that stretch reads RPPPAAFSVP…LLLAAVLLAL (202 aa). 650-716 lines the ATP pocket; sequence VPFPAVAKLE…MEYVPGTEHD (67 aa). Mg(2+)-binding residues include Glu-782, Glu-794, and Asn-796. Mn(2+) is bound by residues Glu-782, Glu-794, and Asn-796.

In terms of assembly, homotetramer. The cofactor is Mg(2+). Requires Mn(2+) as cofactor.

The enzyme catalyses beta-alanine + L-histidine + ATP = carnosine + ADP + phosphate + H(+). The catalysed reaction is 4-aminobutanoate + L-histidine + ATP = L-homocarnosine + ADP + phosphate + H(+). Catalyzes the synthesis of carnosine and homocarnosine. Carnosine is synthesized more efficiently than homocarnosine. The sequence is that of Carnosine synthase 1 from Gallus gallus (Chicken).